The sequence spans 67 residues: UPF0253 protein VS_2370 (67 aa).

This sequence belongs to the UPF0253 family.

In Vibrio atlanticus (strain LGP32) (Vibrio splendidus (strain Mel32)), this protein is UPF0253 protein VS_2370.